The following is a 269-amino-acid chain: Acyl-CoA-binding domain-containing protein 4 (269 aa).

The region spanning 12–101 (CQKQFQAAVS…MKLVAQKVID (90 aa)) is the ACB domain. Residues 23–32 (IQNLPKNGSY), 43–47 (YSYYK), lysine 69, and tyrosine 88 each bind an acyl-CoA. 3 disordered regions span residues 150–175 (GAVSEPPCLPKEPAPPSPESHSPRDL), 195–226 (EQRAASGEKRDPRNSPVPPTEKEAAAQAQCSA), and 248–269 (VALPNVSDPKEVTVSGGVSAAN). Residues 156–167 (PCLPKEPAPPSP) are compositionally biased toward pro residues. Residues serine 166 and serine 171 each carry the phosphoserine modification.

Binds medium- and long-chain acyl-CoA esters and may function as an intracellular carrier of acyl-CoA esters. This is Acyl-CoA-binding domain-containing protein 4 (ACBD4) from Pongo abelii (Sumatran orangutan).